Consider the following 737-residue polypeptide: DNA topoisomerase 4 subunit A (737 aa).

Residues 32–496 (LPDVRDGLKP…SFEEVTLTNQ (465 aa)) form the Topo IIA-type catalytic domain. Y120 acts as the O-(5'-phospho-DNA)-tyrosine intermediate in catalysis.

This sequence belongs to the type II topoisomerase GyrA/ParC subunit family. ParC type 1 subfamily. As to quaternary structure, heterotetramer composed of ParC and ParE.

It localises to the cell membrane. It catalyses the reaction ATP-dependent breakage, passage and rejoining of double-stranded DNA.. In terms of biological role, topoisomerase IV is essential for chromosome segregation. It relaxes supercoiled DNA. Performs the decatenation events required during the replication of a circular DNA molecule. This chain is DNA topoisomerase 4 subunit A, found in Rickettsia felis (strain ATCC VR-1525 / URRWXCal2) (Rickettsia azadi).